The following is a 417-amino-acid chain: MLKREMNIADYDAELWQAMEQEKVRQEEHIELIASENYTSPRVMQAQGSQLTNKYAEGYPGKRYYGGCEYVDIVEQLAIDRAKELFGADYANVQPHSGSQANFTVYTALLEPGDTVLGMNLAHGGHLTHGSPVNFSGKLYNIVPYGIDATGHIDYADLEKQAKEHKPKMIIGGFSAYSGVVDWAKMREIADSIGAYLFVDMAHVAGLVAAGVYPNPVPHAHVVTTTTHKTLAGPRGGLILAKGGSEELYKKLNSAVFPGGQGGPLMHVIAGKAVALKEAMEPEFKTYQQQVAKNAKAMVEVFLERGYKVVSGGTDNHLFLVDLVDKNLTGKEADAALGRANITVNKNSVPNDPKSPFVTSGIRVGTPAITRRGFKEAEAKELAGWMCDVLDSINDEAVIERIKGKVLDICARYPVYA.

Lys-54 bears the N6-acetyllysine mark. (6S)-5,6,7,8-tetrahydrofolate-binding positions include Leu-121 and 125-127 (GHL). An N6-(pyridoxal phosphate)lysine modification is found at Lys-229. N6-acetyllysine occurs at positions 250, 285, and 354. Residue 355 to 357 (SPF) participates in (6S)-5,6,7,8-tetrahydrofolate binding. At Lys-375 the chain carries N6-acetyllysine.

Belongs to the SHMT family. Homodimer. Pyridoxal 5'-phosphate is required as a cofactor.

It localises to the cytoplasm. The catalysed reaction is (6R)-5,10-methylene-5,6,7,8-tetrahydrofolate + glycine + H2O = (6S)-5,6,7,8-tetrahydrofolate + L-serine. The protein operates within one-carbon metabolism; tetrahydrofolate interconversion. Its pathway is amino-acid biosynthesis; glycine biosynthesis; glycine from L-serine: step 1/1. In terms of biological role, catalyzes the reversible interconversion of serine and glycine with tetrahydrofolate (THF) serving as the one-carbon carrier. This reaction serves as the major source of one-carbon groups required for the biosynthesis of purines, thymidylate, methionine, and other important biomolecules. Also exhibits THF-independent aldolase activity toward beta-hydroxyamino acids, producing glycine and aldehydes, via a retro-aldol mechanism. In Shigella dysenteriae serotype 1 (strain Sd197), this protein is Serine hydroxymethyltransferase.